A 570-amino-acid chain; its full sequence is 5-aminolevulinate synthase, mitochondrial (570 aa).

The transit peptide at 1-53 (MESVIRSSAKICPFMHSATGSMQSVKALKNANLPAIAQQCPFMGKAMEQRRGY) directs the protein to the mitochondrion. Residues arginine 119, serine 232, and lysine 251 each contribute to the substrate site. Pyridoxal 5'-phosphate contacts are provided by serine 284, histidine 312, and threonine 356. Lysine 359 is a catalytic residue. Lysine 359 is subject to N6-(pyridoxal phosphate)lysine. Positions 388 and 389 each coordinate pyridoxal 5'-phosphate. Threonine 474 provides a ligand contact to substrate.

It belongs to the class-II pyridoxal-phosphate-dependent aminotransferase family. In terms of assembly, homodimer. Pyridoxal 5'-phosphate is required as a cofactor.

It localises to the mitochondrion matrix. It carries out the reaction succinyl-CoA + glycine + H(+) = 5-aminolevulinate + CO2 + CoA. The protein operates within porphyrin-containing compound metabolism; protoporphyrin-IX biosynthesis; 5-aminolevulinate from glycine: step 1/1. Catalyzes the synthesis of 5-aminolevulinate (ALA) from succinyl-CoA and glycine, the first and rate-limiting step in heme biosynthesis. This is 5-aminolevulinate synthase, mitochondrial (HEM1) from Kluyveromyces lactis (strain ATCC 8585 / CBS 2359 / DSM 70799 / NBRC 1267 / NRRL Y-1140 / WM37) (Yeast).